A 348-amino-acid chain; its full sequence is Small ribosomal subunit biogenesis GTPase RsgA (348 aa).

Residues Met-1–Ile-14 are compositionally biased toward basic residues. Positions Met-1–Gly-39 are disordered. A compositionally biased stretch (basic and acidic residues) spans Lys-16–Gln-31. The CP-type G domain maps to Phe-116–Phe-275. Residues Asn-163–Asp-166 and Gly-217–Ser-225 contribute to the GTP site. Positions 299, 304, 306, and 312 each coordinate Zn(2+).

Belongs to the TRAFAC class YlqF/YawG GTPase family. RsgA subfamily. In terms of assembly, monomer. Associates with 30S ribosomal subunit, binds 16S rRNA. It depends on Zn(2+) as a cofactor.

Its subcellular location is the cytoplasm. Its function is as follows. One of several proteins that assist in the late maturation steps of the functional core of the 30S ribosomal subunit. Helps release RbfA from mature subunits. May play a role in the assembly of ribosomal proteins into the subunit. Circularly permuted GTPase that catalyzes slow GTP hydrolysis, GTPase activity is stimulated by the 30S ribosomal subunit. This Hahella chejuensis (strain KCTC 2396) protein is Small ribosomal subunit biogenesis GTPase RsgA.